A 99-amino-acid chain; its full sequence is Transcriptional repressor PagR (99 aa).

In terms of domain architecture, HTH arsR-type spans 9-99 (IEYMSLEDDA…GIIKLLNPIQ (91 aa)). Residues 43 to 62 (NVTQIIQILKLPQSTVSQHL) constitute a DNA-binding region (H-T-H motif).

In terms of biological role, represses the expression of the pagA and atxA genes. This Bacillus anthracis protein is Transcriptional repressor PagR (pagR).